The following is a 285-amino-acid chain: Heterogeneous nuclear ribonucleoprotein A/B (285 aa).

The interval 1 to 65 (MSDAAEEQPM…NQNGAEGDQI (65 aa)) is disordered. Residues 25–43 (EGEAPVEPSAAAAAPAASA) show a composition bias toward low complexity. 2 RRM domains span residues 75 to 158 (GKMF…KDPV) and 159 to 238 (KKIF…QPKE). Ser87 carries the post-translational modification Phosphoserine. Glycyl lysine isopeptide (Lys-Gly) (interchain with G-Cter in SUMO2) cross-links involve residues Lys136 and Lys208. N6-acetyllysine is present on Lys220. A disordered region spans residues 239-285 (VYQQQQYGSGGRGNRNRGNRGSGGGQGSTNYGKSQRRGGHQNNYKPY). Ser247 carries the phosphoserine modification. Dimethylated arginine; alternate is present on Arg250. Arg250 is modified (omega-N-methylarginine; alternate). Omega-N-methylarginine is present on residues Arg255 and Arg258. The residue at position 271 (Lys271) is an N6-acetyllysine. Arg275 bears the Dimethylated arginine; alternate mark. The residue at position 275 (Arg275) is an Omega-N-methylarginine; alternate. Arg275 carries the post-translational modification Asymmetric dimethylarginine; alternate.

As to quaternary structure, identified in a IGF2BP1-dependent mRNP granule complex containing untranslated mRNAs. Interacts with APOBEC1. As to expression, ubiquitous.

It localises to the nucleus. It is found in the cytoplasm. Its function is as follows. Transcriptional repressor. Binds to CArG box motifs, single-stranded and double-stranded DNA, and RNA. It may be that repression by CBF-A is a result of competitive binding of CBF, a putative positive factor, and CBF-A to the same or overlapping motifs around the CArG boxes. In Mus musculus (Mouse), this protein is Heterogeneous nuclear ribonucleoprotein A/B (Hnrnpab).